The primary structure comprises 223 residues: Sporulation-specific protein 19 (223 aa).

A signal peptide spans 1 to 20; sequence MKKQILIVAAQSILCSTVFG. Asn198 carries GPI-anchor amidated asparagine lipidation. Positions 199-223 are cleaved as a propeptide — removed in mature form; sequence ASNFLTPTTVALAVLLTILLFIQAY.

In terms of processing, the GPI-anchor is attached to the protein in the endoplasmic reticulum and serves to target the protein to the cell surface. There, the glucosamine-inositol phospholipid moiety is cleaved off and the GPI-modified mannoprotein is covalently attached via its lipidless GPI glycan remnant to the 1,6-beta-glucan of the outer cell wall layer.

It is found in the secreted. It localises to the cell wall. The protein resides in the membrane. Involved in sporulation. Essential for completion of the nuclear division. This chain is Sporulation-specific protein 19 (SPO19), found in Saccharomyces cerevisiae (strain ATCC 204508 / S288c) (Baker's yeast).